A 618-amino-acid chain; its full sequence is Cell pattern formation-associated protein STU1 (618 aa).

The segment covering 13 to 28 (MSAGPTQQPPTVTSYN) has biased composition (polar residues). The disordered stretch occupies residues 13 to 105 (MSAGPTQQPP…FDTSGQIAPP (93 aa)). The span at 48–59 (YGGYPYTNGMPS) shows a compositional bias: low complexity. Over residues 91 to 101 (NQYSGFDTSGQ) the composition is skewed to polar residues. The 107-residue stretch at 110 to 216 (RVTATLWEDE…HNISALLYHP (107 aa)) folds into the HTH APSES-type domain. The H-T-H motif DNA-binding region spans 144-165 (GTKLLNVAGMTRGRRDGILKSE). Disordered stretches follow at residues 229–355 (AERR…YDGS) and 390–618 (SEMG…SRRR). Polar residues-rich tracts occupy residues 256 to 266 (MSQNGSQSLSG), 284 to 298 (TSAS…SDSF), 305 to 326 (AMSN…TRSM), and 336 to 355 (GSTL…YDGS). Over residues 438-451 (DHEHDPEYTHDSRT) the composition is skewed to basic and acidic residues. The segment covering 452–476 (YDNSQSQYNYTAPPVSSISSEQAHV) has biased composition (polar residues). The segment covering 494–512 (PRSAAAPQAYYQQAYSTSP) has biased composition (low complexity). A compositionally biased stretch (polar residues) spans 513-563 (RSATHQSTSNLYNVMSNDRGSTTNGSANGDVYSQSTDLSNGYATPVTNGNA). The interval 566-588 (KRGRDDDDDRSSSSGQMDLKRRK) is nuclear localization domain.

The protein belongs to the EFG1/PHD1/stuA family.

It localises to the nucleus. Transcription factor that regulates asexual reproduction. Binds the StuA-response elements (StRE) with the consensus sequence 5'-(A/T)CGCG(T/A)N(A/C)-3' at the promoters of target genes. Required for appressorium-mediated infection of rice leaves due to its involvement in the mobilization of lipids and glycogen. In Pyricularia oryzae (strain 70-15 / ATCC MYA-4617 / FGSC 8958) (Rice blast fungus), this protein is Cell pattern formation-associated protein STU1.